The following is a 399-amino-acid chain: Lymphoid enhancer-binding factor 1 (399 aa).

A compositionally biased stretch (gly residues) spans 1–14; sequence MPQLSGGGGGGGGD. Residues 1 to 62 are CTNNB1-binding; that stretch reads MPQLSGGGGG…IKSSLVNESE (62 aa). The segment at 1 to 104 is disordered; that stretch reads MPQLSGGGGG…KHPDGGLYNK (104 aa). Composition is skewed to basic and acidic residues over residues 24–45 and 82–98; these read IPFK…SHPE and PYHD…KHPD. Lys27 is covalently cross-linked (Glycyl lysine isopeptide (Lys-Gly) (interchain with G-Cter in SUMO)). Residue Ser132 is modified to Phosphoserine. The residue at position 155 (Thr155) is a Phosphothreonine; by NLK. The residue at position 166 (Ser166) is a Phosphoserine; by NLK. Disordered stretches follow at residues 166–192 and 268–298; these read SPGS…PAPD and VKQE…KRPH. Residue Lys269 forms a Glycyl lysine isopeptide (Lys-Gly) (interchain with G-Cter in SUMO) linkage. The span at 269–296 shows a compositional bias: basic and acidic residues; sequence KQEHPHTDSDLMHVKPQHEQRKEQEPKR. The HMG box DNA-binding region spans 299–367; sequence IKKPLNAFML…LHMQLYPGWS (69 aa). The disordered stretch occupies residues 369–399; that stretch reads RDNYGKKKKRKREKLQESASGTGPRMTAAYI.

Belongs to the TCF/LEF family. Binds the armadillo repeat of CTNNB1 and forms a stable complex. Interacts with EP300, TLE1 and PIASG. Binds ALYREF/THOC4, MDFI and MDFIC. Interacts with NLK. Interacts with DAZAP2. Phosphorylated at Thr-155 and/or Ser-166 by NLK. Phosphorylation by NLK at these sites represses LEF1-mediated transcriptional activation of target genes of the canonical Wnt signaling pathway. As to expression, detected in thymus. Not detected in normal colon, but highly expressed in colon cancer biopsies and colon cancer cell lines. Expressed in several pancreatic tumors and weakly expressed in normal pancreatic tissue. Isoforms 1 and 5 are detected in several pancreatic cell lines.

Its subcellular location is the nucleus. Transcription factor that binds DNA in a sequence-specific manner. Participates in the Wnt signaling pathway. Activates transcription of target genes in the presence of CTNNB1 and EP300. PIAG antagonizes both Wnt-dependent and Wnt-independent activation by LEF1. TLE1, TLE2, TLE3 and TLE4 repress transactivation mediated by LEF1 and CTNNB1. Regulates T-cell receptor alpha enhancer function. Required for IL17A expressing gamma-delta T-cell maturation and development, via binding to regulator loci of BLK to modulate expression. Acts as a positive regulator of odontoblast differentiation during mesenchymal tooth germ formation, expression is repressed during the bell stage by MSX1-mediated inhibition of CTNNB1 signaling. May play a role in hair cell differentiation and follicle morphogenesis. In terms of biological role, transcriptionally activates MYC and CCND1 expression and enhances proliferation of pancreatic tumor cells. Its function is as follows. Lacks the CTNNB1 interaction domain and may therefore be an antagonist for Wnt signaling. Functionally, transcriptionally activates the fibronectin promoter, binds to and represses transcription from the E-cadherin promoter in a CTNNB1-independent manner, and is involved in reducing cellular aggregation and increasing cell migration of pancreatic cancer cells. The protein is Lymphoid enhancer-binding factor 1 of Homo sapiens (Human).